The following is a 552-amino-acid chain: Transcription factor kayak (552 aa).

2 disordered regions span residues 110-145 (LAQG…TDST) and 177-234 (GAAS…KRRV). A compositionally biased stretch (polar residues) spans 111–127 (AQGSDSEDSNASYNDTQ). The segment covering 135–145 (TDTSSAHTDST) has biased composition (low complexity). Polar residues predominate over residues 177–192 (GAASVGSSNANTSNTP). One can recognise a bZIP domain in the interval 212–275 (EQKRAVRRER…NQLEYCLAAH (64 aa)). Residues 214–233 (KRAVRRERNKQAAARCRKRR) form a basic motif region. The tract at residues 240–247 (LTEEVEQL) is leucine-zipper. The segment covering 304-325 (AGSSGSGASSHHNHNSNDSSNG) has biased composition (low complexity). Disordered stretches follow at residues 304 to 346 (AGSS…PLDL), 365 to 390 (LDGA…TLPP), and 514 to 552 (GGTG…LVSL). Residues 333–343 (TLNSTGRSNSP) show a composition bias toward polar residues. S342 carries the post-translational modification Phosphoserine.

Belongs to the bZIP family. Fos subfamily. Homodimer. Heterodimer with Jra. The kay-Jra heterodimer binds more stably to the AP-1 site than either of the two proteins alone.

The protein resides in the nucleus. Developmentally regulated transcription factor AP-1 binds and recognizes the enhancer DNA sequence: 5'-TGA[CG]TCA-3'. May play a role in the function or determination of a particular subset of cells in the developing embryo. It is able to carry out its function either independently of or in conjunction with Jra. The sequence is that of Transcription factor kayak from Drosophila yakuba (Fruit fly).